A 440-amino-acid chain; its full sequence is Xaa-Pro dipeptidase (440 aa).

5 residues coordinate Mn(2+): Asp-244, Asp-255, His-335, Glu-380, and Glu-419.

The protein belongs to the peptidase M24B family. Bacterial-type prolidase subfamily. Mn(2+) serves as cofactor.

The catalysed reaction is Xaa-L-Pro dipeptide + H2O = an L-alpha-amino acid + L-proline. Splits dipeptides with a prolyl residue in the C-terminal position. The polypeptide is Xaa-Pro dipeptidase (Shewanella pealeana (strain ATCC 700345 / ANG-SQ1)).